Here is a 175-residue protein sequence, read N- to C-terminus: Ribosome maturation factor RimM (175 aa).

The 74-residue stretch at 99–172 folds into the PRC barrel domain; that stretch reads EGEFHLLDLV…WLRLTPPPGL (74 aa).

It belongs to the RimM family. Binds ribosomal protein uS19.

Its subcellular location is the cytoplasm. In terms of biological role, an accessory protein needed during the final step in the assembly of 30S ribosomal subunit, possibly for assembly of the head region. Essential for efficient processing of 16S rRNA. May be needed both before and after RbfA during the maturation of 16S rRNA. It has affinity for free ribosomal 30S subunits but not for 70S ribosomes. The sequence is that of Ribosome maturation factor RimM from Synechococcus sp. (strain WH7803).